We begin with the raw amino-acid sequence, 438 residues long: Transposon Ty2-B Gag polyprotein (438 aa).

Composition is skewed to polar residues over residues 1–11, 19–39, and 49–60; these read MESQQLHQNPH, ASVT…SASN, and KVNSQQETTPGT. Disordered regions lie at residues 1–88, 364–397, and 419–438; these read MESQ…YQQH, KNVS…AKAH, and SSQY…TERI. The tract at residues 295–397 is RNA-binding; that stretch reads ENNINVSDRL…SSKPRAAKAH (103 aa). Over residues 369-381 the composition is skewed to low complexity; sequence TSPNTTNTKVTTR.

Homotrimer.

The protein resides in the cytoplasm. Its function is as follows. Capsid protein (CA) is the structural component of the virus-like particle (VLP), forming the shell that encapsulates the retrotransposons dimeric RNA genome. The particles are assembled from trimer-clustered units and there are holes in the capsid shells that allow for the diffusion of macromolecules. CA also has nucleocapsid-like chaperone activity, promoting primer tRNA(i)-Met annealing to the multipartite primer-binding site (PBS), dimerization of Ty2 RNA and initiation of reverse transcription. This is Transposon Ty2-B Gag polyprotein (TY2A-B) from Saccharomyces cerevisiae (strain ATCC 204508 / S288c) (Baker's yeast).